Here is a 295-residue protein sequence, read N- to C-terminus: CRISPR system Cmr endoribonuclease Cmr4 (295 aa).

It belongs to the CRISPR system Cmr4 family. As to quaternary structure, forms oligomers in isolation. Part of the type III-B Cmr ribonucleoprotein (RNP) complex, an elongated RNP with Cmr2 and Cmr3 as the base, with Cmr4 and Cmr5 forming a helical core along the mature crRNA (39 or 45 nt in length), while the complex is capped by Cmr6 and Cmr1. The 5' end of the crRNA is bound to Cmr2 and Cmr3, while Cmr6 and a Cmr1 subunit (Cmr1-1 or Cmr1-2) cap the 3' end of the crRNA. The target RNA lies anti-parallel to the crRNA, with its 5' end near Cmr1 and Cmr6 and its 3' end near Cmr2 and Cmr3; major target RNA cleavage occurs nears the junction of Cmr1/Cmr6 and Cmr4/Cmr5, with minor cleavage occurring at 6 nt intervals which coincide with the proposed spacing of Cmr4 subunits. Interacts with Cmr5. Interacts with Cmr2, Cmr3, Cmr5 and Cmr6.

The protein localises to the cytoplasm. In terms of biological role, CRISPR (clustered regularly interspaced short palindromic repeat), is an adaptive immune system that provides protection against mobile genetic elements (viruses, transposable elements and conjugative plasmids). CRISPR clusters contain sequences complementary to antecedent mobile elements and target invading nucleic acids. CRISPR clusters are transcribed and processed into CRISPR RNA (crRNA), formerly called psiRNA (prokaryotic silencing) in this organism. Part of the Cmr ribonucleoprotein complex which has divalent cation-dependent endoribonuclease activity specific for ssRNA complementary to the crRNA (target RNA), generating 5' hydroxy- and 3' phosphate or 2'-3' cyclic phosphate termini. This is probably the subunit that cleaves the target RNA. Cmr complex does not cleave ssDNA complementary to the crRNA. Cleavage of target RNA is guided by the crRNA; substrate cleavage occurs a fixed distance (14 nt) from the 3' end of the crRNA. In vitro reconstitution shows Cmr1-2 and Cmr5 are not absolutely necessary for target cleavage. The polypeptide is CRISPR system Cmr endoribonuclease Cmr4 (Pyrococcus furiosus (strain ATCC 43587 / DSM 3638 / JCM 8422 / Vc1)).